The primary structure comprises 1479 residues: ABC transporter ecdL (1479 aa).

Helical transmembrane passes span 32–52 (LLFEESILYLPPLLIAASVAL), 82–102 (LSNAAIAIGFVASPIFAWLSF), and 142–162 (IASIFATIVVCKVVLLVVEAM). Residues asparagine 183 and asparagine 234 are each glycosylated (N-linked (GlcNAc...) asparagine). 2 consecutive transmembrane segments (helical) span residues 251–271 (WGGFLPRLCLIGVNYAQPFLV) and 291–311 (SGLIAAYAIVYMGIAVATAAF). The ABC transmembrane type-1 1 domain maps to 258 to 535 (LCLIGVNYAQ…FVESLMGLRQ (278 aa)). Residue asparagine 345 is glycosylated (N-linked (GlcNAc...) asparagine). The next 2 membrane-spanning stretches (helical) occupy residues 365-382 (LHETWASLIEIALSLWLL) and 391-411 (VAAAMVVLVCLLVSGALSGLL). An N-linked (GlcNAc...) asparagine glycan is attached at asparagine 427. A run of 2 helical transmembrane segments spans residues 469–489 (LLVALVTLSYLSTTMAPTFAF) and 503–523 (PLLAAPAFSSLTIMTLLGQAV). Positions 607-835 (IVLQNHTASW…GSSLRLEELV (229 aa)) constitute an ABC transporter 1 domain. N-linked (GlcNAc...) asparagine glycans are attached at residues asparagine 611 and asparagine 628. 641 to 648 (GPIGSGKS) provides a ligand contact to ATP. Residues asparagine 793 and asparagine 797 are each glycosylated (N-linked (GlcNAc...) asparagine). 5 helical membrane-spanning segments follow: residues 885–905 (TIGWGSWWIFIVLCSGFVVAL), 955–975 (LFAVWSALAITFFLGACLHLM), 1028–1048 (ALIGAVIALILCISAMAVIVY), 1052–1072 (YLAATIPGLLGLLYLVQMFYL), and 1135–1155 (IWLTLTLDIIVAFLAIILVSI). In terms of domain architecture, ABC transmembrane type-1 2 spans 932-1193 (IWLKFWTEAN…LVYNWTALEN (262 aa)). The N-linked (GlcNAc...) asparagine glycan is linked to asparagine 1161. A helical transmembrane segment spans residues 1165–1185 (ASIGLALVNLIAFGANMKGLV). An N-linked (GlcNAc...) asparagine glycan is attached at asparagine 1187. Residues 1230 to 1461 (IKFKSVTASY…RSIFASLLRS (232 aa)) enclose the ABC transporter 2 domain. Position 1264–1271 (1264–1271 (GRTGCGKS)) interacts with ATP. Residues 1460–1479 (RSGDEEPGNGHKHESEGEEE) are disordered. Positions 1461–1479 (SGDEEPGNGHKHESEGEEE) are enriched in basic and acidic residues.

It belongs to the ABC transporter superfamily. ABCC family. Conjugate transporter (TC 3.A.1.208) subfamily.

Its subcellular location is the cell membrane. ABC transporter; part of the gene cluster that mediates the biosynthesis of echinocandin B, a fungal lipidated cyclic hexapeptide that acts as an antifungal agent. In Aspergillus rugulosus (Emericella rugulosa), this protein is ABC transporter ecdL.